The sequence spans 485 residues: Probable L-xylulose kinase (485 aa).

This sequence belongs to the FGGY kinase family. As to quaternary structure, homodimer.

It catalyses the reaction L-xylulose + ATP = L-xylulose 5-phosphate + ADP + H(+). This chain is Probable L-xylulose kinase (lyx), found in Haemophilus influenzae (strain ATCC 51907 / DSM 11121 / KW20 / Rd).